The chain runs to 533 residues: Retinoid isomerohydrolase (533 aa).

At Ser-2 the chain carries N-acetylserine. Residues Thr-101 and Thr-105 each carry the phosphothreonine modification. Residue Cys-112 is the site of S-palmitoyl cysteine; in membrane form attachment. The residue at position 113 (Lys-113) is an N6-acetyllysine. Ser-117 carries the phosphoserine modification. Residue His-180 coordinates Fe cation. Residue Cys-231 is the site of S-palmitoyl cysteine; in membrane form attachment. The Fe cation site is built by His-241 and His-313. S-palmitoyl cysteine; in membrane form attachment occurs at residues Cys-329 and Cys-330. Residue His-527 participates in Fe cation binding.

It belongs to the carotenoid oxygenase family. Interacts with MYO7A; this mediates light-dependent intracellular transport of RPE65. Fe(2+) is required as a cofactor. In terms of processing, palmitoylation by LRAT regulates ligand binding specificity; the palmitoylated form (membrane form) specifically binds all-trans-retinyl-palmitate, while the soluble unpalmitoylated form binds all-trans-retinol (vitamin A). As to expression, retinal pigment epithelium specific.

Its subcellular location is the cytoplasm. It localises to the cell membrane. It is found in the microsome membrane. It carries out the reaction an all-trans-retinyl ester + H2O = 11-cis-retinol + a fatty acid + H(+). The enzyme catalyses lutein = (3R,3'S)-zeaxanthin. It catalyses the reaction all-trans-retinyl hexadecanoate + H2O = 11-cis-retinol + hexadecanoate + H(+). Critical isomerohydrolase in the retinoid cycle involved in regeneration of 11-cis-retinal, the chromophore of rod and cone opsins. Catalyzes the cleavage and isomerization of all-trans-retinyl fatty acid esters to 11-cis-retinol which is further oxidized by 11-cis retinol dehydrogenase to 11-cis-retinal for use as visual chromophore. Essential for the production of 11-cis retinal for both rod and cone photoreceptors. Also capable of catalyzing the isomerization of lutein to meso-zeaxanthin an eye-specific carotenoid. The soluble form binds vitamin A (all-trans-retinol), making it available for LRAT processing to all-trans-retinyl ester. The membrane form, palmitoylated by LRAT, binds all-trans-retinyl esters, making them available for IMH (isomerohydrolase) processing to all-cis-retinol. The soluble form is regenerated by transferring its palmitoyl groups onto 11-cis-retinol, a reaction catalyzed by LRAT. This is Retinoid isomerohydrolase (RPE65) from Canis lupus familiaris (Dog).